A 321-amino-acid polypeptide reads, in one-letter code: Glutaminase (321 aa).

Substrate contacts are provided by Ser-69, Asn-120, Glu-165, Asn-172, Tyr-196, Tyr-248, and Val-266.

Belongs to the glutaminase family. As to quaternary structure, homotetramer.

The enzyme catalyses L-glutamine + H2O = L-glutamate + NH4(+). The chain is Glutaminase from Parabacteroides distasonis (strain ATCC 8503 / DSM 20701 / CIP 104284 / JCM 5825 / NCTC 11152).